The chain runs to 250 residues: 5-oxoprolinase subunit A (250 aa).

Belongs to the LamB/PxpA family. Forms a complex composed of PxpA, PxpB and PxpC.

It carries out the reaction 5-oxo-L-proline + ATP + 2 H2O = L-glutamate + ADP + phosphate + H(+). In terms of biological role, catalyzes the cleavage of 5-oxoproline to form L-glutamate coupled to the hydrolysis of ATP to ADP and inorganic phosphate. This chain is 5-oxoprolinase subunit A, found in Staphylococcus aureus (strain MW2).